We begin with the raw amino-acid sequence, 439 residues long: Serine hydroxymethyltransferase (439 aa).

(6S)-5,6,7,8-tetrahydrofolate contacts are provided by residues L134 and 138-140; that span reads GHL. K243 is subject to N6-(pyridoxal phosphate)lysine.

The protein belongs to the SHMT family. As to quaternary structure, homodimer. Requires pyridoxal 5'-phosphate as cofactor.

It localises to the cytoplasm. It carries out the reaction (6R)-5,10-methylene-5,6,7,8-tetrahydrofolate + glycine + H2O = (6S)-5,6,7,8-tetrahydrofolate + L-serine. It functions in the pathway one-carbon metabolism; tetrahydrofolate interconversion. It participates in amino-acid biosynthesis; glycine biosynthesis; glycine from L-serine: step 1/1. Catalyzes the reversible interconversion of serine and glycine with tetrahydrofolate (THF) serving as the one-carbon carrier. This reaction serves as the major source of one-carbon groups required for the biosynthesis of purines, thymidylate, methionine, and other important biomolecules. Also exhibits THF-independent aldolase activity toward beta-hydroxyamino acids, producing glycine and aldehydes, via a retro-aldol mechanism. This is Serine hydroxymethyltransferase from Brucella anthropi (strain ATCC 49188 / DSM 6882 / CCUG 24695 / JCM 21032 / LMG 3331 / NBRC 15819 / NCTC 12168 / Alc 37) (Ochrobactrum anthropi).